Here is a 356-residue protein sequence, read N- to C-terminus: Neurogenic differentiation factor 1 (356 aa).

Residues 1-94 are disordered; that stretch reads MTKSYSESGL…GPKKKKMTKA (94 aa). The segment covering 58–78 has biased composition (acidic residues); sequence EEEDEDEDLEEEEEEEEEDDD. The segment covering 81 to 93 has biased composition (basic residues); that stretch reads PKRRGPKKKKMTK. The Nuclear localization signal motif lies at 87 to 93; that stretch reads KKKKMTK. The bHLH domain maps to 101 to 153; sequence LRRMKANARERNRMHGLNAALDNLRKVVPCYSKTQKLSKIETLRLAKNYIWAL. A phosphoserine mark is found at Ser-162, Ser-259, Ser-266, and Ser-274. Residue Ser-335 is modified to Phosphoserine; by CaMK2.

Efficient DNA-binding requires dimerization with another bHLH protein. Heterodimer with TCF3/E47; the heterodimer is inhibited in presence of ID2, but not NR0B2, to E-box element. Interacts with EP300; the interaction is inhibited by NR0B2. Interacts with RREB1. Interacts with ATOH8. In terms of processing, phosphorylated. In islet cells, phosphorylated on Ser-274 upon glucose stimulation; which may be required for nuclear localization. In activated neurons, phosphorylated on Ser-335; which promotes dendritic growth. Phosphorylated by MAPK1; phosphorylation regulates heterodimerization and DNA-binding activities. Phosphorylation on Ser-266 and Ser-274 increases transactivation on the insulin promoter in glucose-stimulated insulinoma cells.

The protein resides in the cytoplasm. The protein localises to the nucleus. In terms of biological role, acts as a transcriptional activator: mediates transcriptional activation by binding to E box-containing promoter consensus core sequences 5'-CANNTG-3'. Associates with the p300/CBP transcription coactivator complex to stimulate transcription of the secretin gene as well as the gene encoding the cyclin-dependent kinase inhibitor CDKN1A. Contributes to the regulation of several cell differentiation pathways, like those that promote the formation of early retinal ganglion cells, inner ear sensory neurons, granule cells forming either the cerebellum or the dentate gyrus cell layer of the hippocampus, endocrine islet cells of the pancreas and enteroendocrine cells of the small intestine. Together with PAX6 or SIX3, is required for the regulation of amacrine cell fate specification. Also required for dendrite morphogenesis and maintenance in the cerebellar cortex. Associates with chromatin to enhancer regulatory elements in genes encoding key transcriptional regulators of neurogenesis. This is Neurogenic differentiation factor 1 (NEUROD1) from Homo sapiens (Human).